Reading from the N-terminus, the 429-residue chain is Adenylosuccinate synthetase (429 aa).

GTP contacts are provided by residues 12–18 and 40–42; these read GDEGKGK and GHT. Aspartate 13 acts as the Proton acceptor in catalysis. Mg(2+)-binding residues include aspartate 13 and glycine 40. IMP is bound by residues 13-16, 38-41, threonine 129, arginine 143, glutamine 224, threonine 239, and arginine 303; these read DEGK and NAGH. Residue histidine 41 is the Proton donor of the active site. 299–305 lines the substrate pocket; the sequence is VTTGRAR. GTP contacts are provided by residues arginine 305, 331 to 333, and 413 to 415; these read KLD and GVG.

The protein belongs to the adenylosuccinate synthetase family. In terms of assembly, homodimer. The cofactor is Mg(2+).

Its subcellular location is the cytoplasm. It carries out the reaction IMP + L-aspartate + GTP = N(6)-(1,2-dicarboxyethyl)-AMP + GDP + phosphate + 2 H(+). It functions in the pathway purine metabolism; AMP biosynthesis via de novo pathway; AMP from IMP: step 1/2. Functionally, plays an important role in the de novo pathway of purine nucleotide biosynthesis. Catalyzes the first committed step in the biosynthesis of AMP from IMP. This is Adenylosuccinate synthetase from Rhodococcus opacus (strain B4).